Here is a 1188-residue protein sequence, read N- to C-terminus: DNA-directed RNA polymerase subunit beta (1188 aa).

This sequence belongs to the RNA polymerase beta chain family. In terms of assembly, the RNAP catalytic core consists of 2 alpha, 1 beta, 1 beta' and 1 omega subunit. When a sigma factor is associated with the core the holoenzyme is formed, which can initiate transcription.

The catalysed reaction is RNA(n) + a ribonucleoside 5'-triphosphate = RNA(n+1) + diphosphate. In terms of biological role, DNA-dependent RNA polymerase catalyzes the transcription of DNA into RNA using the four ribonucleoside triphosphates as substrates. This Streptococcus equi subsp. zooepidemicus (strain H70) protein is DNA-directed RNA polymerase subunit beta.